The sequence spans 121 residues: Ribonuclease P protein component (121 aa).

The protein belongs to the RnpA family. In terms of assembly, consists of a catalytic RNA component (M1 or rnpB) and a protein subunit.

The enzyme catalyses Endonucleolytic cleavage of RNA, removing 5'-extranucleotides from tRNA precursor.. Its function is as follows. RNaseP catalyzes the removal of the 5'-leader sequence from pre-tRNA to produce the mature 5'-terminus. It can also cleave other RNA substrates such as 4.5S RNA. The protein component plays an auxiliary but essential role in vivo by binding to the 5'-leader sequence and broadening the substrate specificity of the ribozyme. This chain is Ribonuclease P protein component, found in Nitrosomonas eutropha (strain DSM 101675 / C91 / Nm57).